A 410-amino-acid chain; its full sequence is Transposase for insertion sequence element IS801 (410 aa).

The protein belongs to the transposase 32 family.

In terms of biological role, involved in the transposition of the insertion sequence. This Pseudomonas savastanoi pv. phaseolicola (Pseudomonas syringae pv. phaseolicola) protein is Transposase for insertion sequence element IS801.